Consider the following 478-residue polypeptide: MFKFHQVKHIFEILDKMRCLRKRFTVSFLGVLVIFLLFMNLYIEDSYVLEGDKQLVRETSIHQLNPERYVHTFKYLSNFSGTINVTYRYLAVMPFQRKRFLTIGLSSVRRKKGNYLLETIKSIFEQSSYEELKEISVVVHLADFNSSWREVMVQDITQKFAHHIIAGRLMVIHAPEEYYPVLNGLKRNYNDPEDRVRFRSKQNVDYAFLLNFCANISDYYVMLEDDVRCSKNFLTAIKKVITSLQGTYWVTLEFSKLGYIGKLYHSHDLPRLAHFLLMFYQEMPCDWLLTHFRGLLAQKNVIRFKPSLFQHMGYYSSYKGTENKLKDDDFEEELIDLPDNPPASLYTNMSVFENYDASKAYSSVDGYFWGKPPSTGDVFVVVFENPVIIKKIKVSTGTEDRQNDILHHGALDVGGYIRYFKQNRQCITYIRLGEFKNGNFEVSDVNQKIPFDVHCMRIHVTKTQKEWLIIRSISIWTS.

Over 1–23 the chain is Cytoplasmic; that stretch reads MFKFHQVKHIFEILDKMRCLRKR. A helical; Signal-anchor for type II membrane protein transmembrane segment spans residues 24–44; that stretch reads FTVSFLGVLVIFLLFMNLYIE. At 45–478 the chain is on the lumenal side; the sequence is DSYVLEGDKQ…IIRSISIWTS (434 aa). Asparagine 84, asparagine 215, and asparagine 348 each carry an N-linked (GlcNAc...) asparagine glycan.

Belongs to the glycosyltransferase 54 family. A divalent metal cation is required as a cofactor.

The protein localises to the golgi apparatus membrane. The catalysed reaction is N(4)-{beta-D-GlcNAc-(1-&gt;2)-alpha-D-Man-(1-&gt;3)-[beta-D-GlcNAc-(1-&gt;2)-alpha-D-Man-(1-&gt;6)]-beta-D-Man-(1-&gt;4)-beta-D-GlcNAc-(1-&gt;4)-beta-D-GlcNAc}-L-asparaginyl-[protein] + UDP-N-acetyl-alpha-D-glucosamine = N(4)-{beta-D-GlcNAc-(1-&gt;2)-[beta-D-GlcNAc-(1-&gt;4)]-alpha-D-Man-(1-&gt;3)-[beta-D-GlcNAc-(1-&gt;2)-alpha-D-Man-(1-&gt;6)]-beta-D-Man-(1-&gt;4)-beta-D-GlcNAc-(1-&gt;4)-beta-D-GlcNAc}-L-asparaginyl-[protein] + UDP + H(+). Its pathway is protein modification; protein glycosylation. Its function is as follows. Glycosyltransferase that participates in the transfer of N-acetylglucosamine (GlcNAc) to the core mannose residues of N-linked glycans. Catalyzes the formation of the GlcNAcbeta1-4 branch on the GlcNAcbeta1-2Manalpha1-3 arm of the core structure of N-linked glycans. Essential for the production of tri- and tetra-antennary N-linked sugar chains. Does not catalyze the transfer of GlcNAc to the Manalpha1-6 arm to form GlcNAcBeta1-4Manalpha1-6 linkage ('GnT-VI' activity). This Sus scrofa (Pig) protein is Alpha-1,3-mannosyl-glycoprotein 4-beta-N-acetylglucosaminyltransferase C (MGAT4C).